Reading from the N-terminus, the 342-residue chain is Pre-mRNA-splicing factor 18 (342 aa).

Methionine 1 is subject to N-acetylmethionine.

It belongs to the PRP18 family. Heterodimer with PPIH. Interacts with PRPF4 and with the spliceosome. Part of a complex containing U4/U6 snRNPs.

The protein localises to the nucleus speckle. In terms of biological role, participates in the second step of pre-mRNA splicing. The polypeptide is Pre-mRNA-splicing factor 18 (PRPF18) (Pongo abelii (Sumatran orangutan)).